The chain runs to 541 residues: Kinesin light chain 1 (541 aa).

A coiled-coil region spans residues Lys-27–Lys-156. A compositionally biased stretch (basic and acidic residues) spans Lys-156–Leu-176. Residues Lys-156 to Ala-201 form a disordered region. Residue Ser-162 is modified to Phosphoserine. TPR repeat units follow at residues Leu-211–Thr-244, Ala-253–Thr-286, Ala-295–Val-328, Ala-337–Lys-370, and Ala-380–Ala-413. Tyr-448 carries the post-translational modification Phosphotyrosine. Ser-459 bears the Phosphoserine mark. The TPR 6 repeat unit spans residues Thr-463–Gly-496. Positions Arg-493–Ala-541 are disordered. Composition is skewed to basic and acidic residues over residues Gln-495–Val-505 and Ser-514–Leu-524. A phosphoserine; by AMPK mark is found at Ser-520 and Ser-523.

This sequence belongs to the kinesin light chain family. In terms of assembly, oligomeric complex composed of two heavy chains and two light chains. Interacts with SPAG9. Interacts with ATCAY; may link mitochondria to KLC1 and regulate mitochondria localization into neuron projections. Interacts (via TPR repeats) with TOR1A; the interaction associates TOR1A with the kinesin oligomeric complex. Interacts with BORCS5. Interacts with MAPK8IP3/JIP3 and NTRK2/TRKB; interaction with NTRK2/TRKB is mediated by MAPK8IP3/JIP3. Interacts with CLSTN1; phosphorylation at Ser-459 inhibits interaction with CLSTN1. Post-translationally, phosphorylation at Ser-459 by ERK inhibits interaction with CLSTN1 and localization to cytoplasmic vesicles.

The protein localises to the cell projection. Its subcellular location is the growth cone. It localises to the cytoplasmic vesicle. The protein resides in the cytoplasm. It is found in the cytoskeleton. Functionally, kinesin is a microtubule-associated force-producing protein that may play a role in organelle transport. The light chain may function in coupling of cargo to the heavy chain or in the modulation of its ATPase activity. This Mus musculus (Mouse) protein is Kinesin light chain 1 (Klc1).